The primary structure comprises 258 residues: Putative cysteine-rich repeat secretory protein 35 (258 aa).

An N-terminal signal peptide occupies residues 1–29 (MYSSYSLSKRLIYVPILAIQFLLVRSVSS). Gnk2-homologous domains follow at residues 36–138 (YLNH…TIKP) and 146–255 (FKNT…LYPF).

This sequence belongs to the cysteine-rich repeat secretory protein family.

The protein resides in the secreted. In Arabidopsis thaliana (Mouse-ear cress), this protein is Putative cysteine-rich repeat secretory protein 35 (CRRSP35).